The primary structure comprises 305 residues: ATP synthase gamma chain (305 aa).

The protein belongs to the ATPase gamma chain family. F-type ATPases have 2 components, CF(1) - the catalytic core - and CF(0) - the membrane proton channel. CF(1) has five subunits: alpha(3), beta(3), gamma(1), delta(1), epsilon(1). CF(0) has three main subunits: a, b and c.

The protein resides in the cell membrane. Functionally, produces ATP from ADP in the presence of a proton gradient across the membrane. The gamma chain is believed to be important in regulating ATPase activity and the flow of protons through the CF(0) complex. This Mycobacterium tuberculosis (strain ATCC 25177 / H37Ra) protein is ATP synthase gamma chain.